We begin with the raw amino-acid sequence, 361 residues long: MSASPAANTFGASAPPANMFDTVPGYEGTLAGGGGGYLPPPMPSVPMPVPEQAPHPPDWHIPSISEERAREAFATYVSSNCCYSSGPVTDGVITNMQSFNTYRYRLETFTESRSTEWSQEPYSGQPVDAGVQPAPGPWQIAAQPPPFFQDQKQAIKVPFTSSIKNCHVCLGMGNKPCTTCAGAGNKVCWVCNGSGSRLNDERCSHCNGQGRENCSSCSGNGSSQCDTCHGKRQLIVFINLNVKWSTEKEDFVAQDLSGLKVEKLEKVSGKELFKDSQFMVYPVMGFPDASVAQASQRIVRDHQTKFAQTSRILQQRQTIELIPVTKVNYTWKGNPYVYYVYGNEFEVNAEDYPATCCCSVM.

It localises to the cytoplasm. Its subcellular location is the nucleus. In terms of biological role, plays a role in odontogenesis. The chain is Protein SSUH2 homolog from Danio rerio (Zebrafish).